We begin with the raw amino-acid sequence, 121 residues long: Two-component response regulator ORR12 (121 aa).

The region spanning 5–121 is the Response regulatory domain; sequence HVLVVDDTLV…VDLPRILNYI (117 aa). Asp-55 is modified (4-aspartylphosphate).

This sequence belongs to the ARR family. Type-A subfamily. In terms of processing, two-component system major event consists of a His-to-Asp phosphorelay between a sensor histidine kinase (HK) and a response regulator (RR). In plants, the His-to-Asp phosphorelay involves an additional intermediate named Histidine-containing phosphotransfer protein (HPt). This multistep phosphorelay consists of a His-Asp-His-Asp sequential transfer of a phosphate group between first a His and an Asp of the HK protein, followed by the transfer to a conserved His of the HPt protein and finally the transfer to an Asp in the receiver domain of the RR protein. As to expression, expressed in flowers and panicles.

Functionally, functions as a response regulator involved in His-to-Asp phosphorelay signal transduction system. Phosphorylation of the Asp residue in the receiver domain activates the ability of the protein to promote the transcription of target genes. Type-A response regulators seem to act as negative regulators of the cytokinin signaling. This Oryza sativa subsp. japonica (Rice) protein is Two-component response regulator ORR12.